The following is a 211-amino-acid chain: Ubiquitin-conjugating enzyme E2 S (211 aa).

Residues 11–157 (HIIRQVYKEV…ARLMTEIHAQ (147 aa)) form the UBC core domain. Cysteine 95 serves as the catalytic Glycyl thioester intermediate. Positions 157–211 (QGSSLRGKDPTDPCSSASATLVSGDGPMAKKHAGDRDKKLAAKKKTDKKRALRRL) are disordered. Residues 197 to 211 (AAKKKTDKKRALRRL) show a composition bias toward basic residues.

This sequence belongs to the ubiquitin-conjugating enzyme family.

The catalysed reaction is S-ubiquitinyl-[E1 ubiquitin-activating enzyme]-L-cysteine + [E2 ubiquitin-conjugating enzyme]-L-cysteine = [E1 ubiquitin-activating enzyme]-L-cysteine + S-ubiquitinyl-[E2 ubiquitin-conjugating enzyme]-L-cysteine.. It participates in protein modification; protein ubiquitination. Functionally, catalyzes the covalent attachment of ubiquitin to other proteins. Acts as an essential factor of the anaphase promoting complex/cyclosome (APC/C), a cell cycle-regulated ubiquitin ligase that controls progression through mitosis. Acts by specifically elongating 'Lys-11'-linked polyubiquitin chains initiated by the E2 enzyme ube2c/ubch10 on APC/C substrates, enhancing the degradation of APC/C substrates by the proteasome and promoting mitotic exit. The sequence is that of Ubiquitin-conjugating enzyme E2 S (ube2s) from Xenopus tropicalis (Western clawed frog).